A 782-amino-acid polypeptide reads, in one-letter code: Transcription factor Sp4 (782 aa).

3 disordered regions span residues 1–48 (MSDQ…PLAL), 107–148 (PPAS…TPNQ), and 275–385 (GGGT…QNAQ). Residue S44 is modified to Phosphoserine. A compositionally biased stretch (polar residues) spans 107–119 (PPASKENNVSQPA). Composition is skewed to low complexity over residues 120–146 (SSSS…PSTP) and 281–342 (VGQP…SADT). Residues 344–354 (QYASTSASSSE) show a composition bias toward polar residues. Positions 364 to 378 (AATESEAQSSSQLQS) are enriched in low complexity. The short motif at 465–473 (ISWQTVQVQ) is the 9aaTAD; inactive element. 3 C2H2-type zinc fingers span residues 645 to 669 (HVCH…LRWH), 675 to 699 (FICN…RRTH), and 705 to 727 (FECP…VKTH).

This sequence belongs to the Sp1 C2H2-type zinc-finger protein family. In terms of tissue distribution, expressed in many tissues.

The protein localises to the nucleus. Its function is as follows. Binds to GT and GC boxes promoters elements. Probable transcriptional activator. Required for normal male reproductive behavior. In Mus musculus (Mouse), this protein is Transcription factor Sp4 (Sp4).